Reading from the N-terminus, the 195-residue chain is Heat shock protein beta-8 (195 aa).

Ser56 is modified (phosphoserine). Position 62 is a phosphothreonine (Thr62). Arg70 and Arg77 each carry asymmetric dimethylarginine. Positions Thr73–Glu184 constitute a sHSP domain. Residues Thr175–Thr195 form a disordered region. The segment covering Phe176–Thr195 has biased composition (polar residues).

Belongs to the small heat shock protein (HSP20) family. Monomer. Forms a ternary complex with BAG3 and HSPA1A. Component of the chaperone-assisted selective autophagy (CASA) complex consisting of BAG3, HSPA8/HSC70, HSPB8 and STUB1/CHIP. Interacts with HSPB1. Interacts with DNAJB6. Interacts with BAG3. Phosphorylated.

Its subcellular location is the cytoplasm. The protein localises to the nucleus. Functionally, involved in the chaperone-assisted selective autophagy (CASA), a crucial process for protein quality control, particularly in mechanical strained cells and tissues such as muscle. Displays temperature-dependent chaperone activity. In Macaca mulatta (Rhesus macaque), this protein is Heat shock protein beta-8 (HSPB8).